A 66-amino-acid chain; its full sequence is Large ribosomal subunit protein uL29 (66 aa).

This sequence belongs to the universal ribosomal protein uL29 family.

The polypeptide is Large ribosomal subunit protein uL29 (Bartonella quintana (strain Toulouse) (Rochalimaea quintana)).